A 431-amino-acid polypeptide reads, in one-letter code: Mannan endo-1,4-beta-mannosidase 7 (431 aa).

Positions 1 to 25 (MKLLALFPFLAIVIQLSCWELGTDA) are cleaved as a signal peptide. Substrate-binding residues include Trp87 and Asn202. Glu203 acts as the Proton donor in catalysis. Tyr280 contributes to the substrate binding site. Glu320 acts as the Nucleophile in catalysis. A substrate-binding site is contributed by Trp362.

Belongs to the glycosyl hydrolase 5 (cellulase A) family. Expressed in stems, flowers, siliques and seeds. Expressed in root vasculature, leaf hydathodes, anther filaments, stigma, sepal vasculature, at the base and apical parts of siliques, and replum. Expressed in the micropylar endosperm and radicle tip in early germinating seeds.

It is found in the secreted. The catalysed reaction is Random hydrolysis of (1-&gt;4)-beta-D-mannosidic linkages in mannans, galactomannans and glucomannans.. Functionally, required for both, loosening of the micropylar endosperm, and rupture of the seed coat in germinating seeds. May participate in the hydrolysis of the mannans in the cell wall of germinating seeds. This Arabidopsis thaliana (Mouse-ear cress) protein is Mannan endo-1,4-beta-mannosidase 7 (MAN7).